The chain runs to 155 residues: Large ribosomal subunit protein eL24 (155 aa).

The segment covering 93–123 (KRNARPETRNATRAKHAEAAKERKEKEAERR) has biased composition (basic and acidic residues). The disordered stretch occupies residues 93–155 (KRNARPETRN…SAPKVQATSR (63 aa)).

The protein belongs to the eukaryotic ribosomal protein eL24 family.

The sequence is that of Large ribosomal subunit protein eL24 (RPL24) from Yarrowia lipolytica (strain CLIB 122 / E 150) (Yeast).